The primary structure comprises 391 residues: GTPase Obg (391 aa).

Positions 1 to 159 (MQFVDEATID…RRLRLELKVL (159 aa)) constitute an Obg domain. Residues 160 to 333 (ADVGLLGMPN…LVYALMNAIE (174 aa)) enclose the OBG-type G domain. Residues 166–173 (GMPNAGKS), 191–195 (FTTLI), 213–216 (DIPG), 283–286 (NKID), and 314–316 (SAA) each bind GTP. Residues serine 173 and threonine 193 each coordinate Mg(2+). Positions 367 to 377 (LKAEARQARQN) are enriched in basic and acidic residues. The disordered stretch occupies residues 367–391 (LKAEARQARQNDDDDDHDVEVVYEP). The segment covering 378 to 391 (DDDDDHDVEVVYEP) has biased composition (acidic residues).

This sequence belongs to the TRAFAC class OBG-HflX-like GTPase superfamily. OBG GTPase family. As to quaternary structure, monomer. It depends on Mg(2+) as a cofactor.

It localises to the cytoplasm. Functionally, an essential GTPase which binds GTP, GDP and possibly (p)ppGpp with moderate affinity, with high nucleotide exchange rates and a fairly low GTP hydrolysis rate. Plays a role in control of the cell cycle, stress response, ribosome biogenesis and in those bacteria that undergo differentiation, in morphogenesis control. The chain is GTPase Obg from Alcanivorax borkumensis (strain ATCC 700651 / DSM 11573 / NCIMB 13689 / SK2).